Reading from the N-terminus, the 101-residue chain is A-type ATP synthase subunit F (101 aa).

The protein belongs to the V-ATPase F subunit family. As to quaternary structure, has multiple subunits with at least A(3), B(3), C, D, E, F, H, I and proteolipid K(x).

The protein resides in the cell membrane. In terms of biological role, component of the A-type ATP synthase that produces ATP from ADP in the presence of a proton gradient across the membrane. This chain is A-type ATP synthase subunit F, found in Archaeoglobus fulgidus (strain ATCC 49558 / DSM 4304 / JCM 9628 / NBRC 100126 / VC-16).